Consider the following 103-residue polypeptide: Large ribosomal subunit protein eL21 (103 aa).

This sequence belongs to the eukaryotic ribosomal protein eL21 family.

The sequence is that of Large ribosomal subunit protein eL21 from Sulfurisphaera tokodaii (strain DSM 16993 / JCM 10545 / NBRC 100140 / 7) (Sulfolobus tokodaii).